Reading from the N-terminus, the 330-residue chain is Diacylglycerol acyltransferase/mycolyltransferase Ag85B (330 aa).

The N-terminal stretch at 1 to 40 is a signal peptide; it reads MTDLSEKVRAWGRRLVVGAAAAATLPGLIGIAGGAATANA. A substrate-binding site is contributed by 82–83; it reads LR. Residues 98-108 form a fibronectin-binding region; it reads FEWYYQSGLSV. A disulfide bridge connects residues cysteine 127 and cysteine 132. Substrate is bound by residues serine 166 and aspartate 194. The active-site Nucleophile is the serine 166. The active site involves glutamate 270. Residues 272 to 275, lysine 279, and 302 to 304 each bind substrate; these read FVRS and HSW. The active site involves histidine 302.

This sequence belongs to the mycobacterial A85 antigen family.

Its subcellular location is the secreted. It catalyses the reaction 2 alpha,alpha'-trehalose 6-mycolate = alpha,alpha'-trehalose 6,6'-bismycolate + alpha,alpha-trehalose. It carries out the reaction an acyl-CoA + a 1,2-diacyl-sn-glycerol = a triacyl-sn-glycerol + CoA. Functionally, the antigen 85 proteins (FbpA, FbpB, FbpC) are responsible for the high affinity of mycobacteria for fibronectin, a large adhesive glycoprotein, which facilitates the attachment of M.tuberculosis to murine alveolar macrophages (AMs). They also help to maintain the integrity of the cell wall by catalyzing the transfer of mycolic acids to cell wall arabinogalactan and through the synthesis of alpha,alpha-trehalose dimycolate (TDM, cord factor). They catalyze the transfer of a mycoloyl residue from one molecule of alpha,alpha-trehalose monomycolate (TMM) to another TMM, leading to the formation of TDM. The protein is Diacylglycerol acyltransferase/mycolyltransferase Ag85B (fbpB) of Mycobacterium intracellulare (strain ATCC 13950 / DSM 43223 / JCM 6384 / NCTC 13025 / 3600).